The sequence spans 1358 residues: DNA-directed RNA polymerase subunit beta (1358 aa).

Belongs to the RNA polymerase beta chain family. In terms of assembly, the RNAP catalytic core consists of 2 alpha, 1 beta, 1 beta' and 1 omega subunit. When a sigma factor is associated with the core the holoenzyme is formed, which can initiate transcription.

The catalysed reaction is RNA(n) + a ribonucleoside 5'-triphosphate = RNA(n+1) + diphosphate. Its function is as follows. DNA-dependent RNA polymerase catalyzes the transcription of DNA into RNA using the four ribonucleoside triphosphates as substrates. This chain is DNA-directed RNA polymerase subunit beta, found in Neorickettsia sennetsu (strain ATCC VR-367 / Miyayama) (Ehrlichia sennetsu).